A 331-amino-acid chain; its full sequence is Neurogenic differentiation factor 4 (331 aa).

Residues 1–80 are disordered; that stretch reads MSKTFVKSKE…GPKKKKMTKA (80 aa). Acidic residues predominate over residues 52–64; that stretch reads DSIEEEEEEEEDG. The span at 67-79 shows a compositional bias: basic residues; sequence PKRRGPKKKKMTK. Residues 87-139 enclose the bHLH domain; that stretch reads ARRVKANARERTRMHGLNDALDNLRRVMPCYSKTQKLSKIETLRLARNYIWAL. The segment at 246 to 265 is disordered; the sequence is TPPYEGPLTPPLSISGNFSL.

As to quaternary structure, efficient DNA binding requires dimerization with another bHLH protein. In terms of processing, serine or threonine phosphorylation within the basic region may regulate neurogenic activity.

Its subcellular location is the nucleus. Functionally, probably acts as a transcriptional activator. Mediates neuronal differentiation. Required for the regulation of amacrine cell fate specification in the retina. The polypeptide is Neurogenic differentiation factor 4 (NEUROD4) (Homo sapiens (Human)).